The sequence spans 370 residues: Nematocyst expressed protein 4 (370 aa).

An N-terminal signal peptide occupies residues 1–19 (MAWTLVLLVLLGTSSCLDA). Positions 34 to 55 (SGSGSGEEGSSGSGSAPEPVRD) are disordered. The span at 36 to 45 (SGSGEEGSSG) shows a compositional bias: gly residues. 3 ShKT domains span residues 70-102 (CLDKGENCTGDPEQCQENWQEMVVQCPFSCRFC), 113-149 (CTDARGAACKDWADNRNDCLRFPQFMSTECTKSCKLC), and 155-190 (GKKFDKDVRCIEWAKNGYCNEGELYKEKCPHNCEVH). Intrachain disulfides connect C70-C102, C77-C95, C84-C99, C113-C149, C121-C142, C131-C146, C164-C183, and C173-C187. Residues 306–340 (PYPPPPPPYPEQVPPPPPPPPPPPPPPPYPYPYPY) are compositionally biased toward pro residues. The interval 306 to 370 (PYPPPPPPYP…HHKENHSKKS (65 aa)) is disordered. Positions 349 to 370 (HKSKKHAKHHEKHHKENHSKKS) are enriched in basic residues.

It belongs to the NEP3 family. As to expression, nematocytes. In late planulae, transcripts are found throughout the ectoderm in nematocytes, with high concentration of expressing cells in the oral pole. In primary polyps, is expressed in nematocytes in the body wall and physa ectoderm and in the upper and lower pharynx.

Its subcellular location is the nematocyst. The protein resides in the secreted. This is Nematocyst expressed protein 4 from Nematostella vectensis (Starlet sea anemone).